We begin with the raw amino-acid sequence, 127 residues long: Fumarate reductase subunit C (127 aa).

3 helical membrane-spanning segments follow: residues 30 to 50 (ATVLPLILFTLFLTFGLGCLV), 58 to 78 (GWLAFMANPIVVAINIVALLG), and 107 to 127 (IIVLTQWAAVAFISLIVLIVV).

The protein belongs to the FrdC family. In terms of assembly, part of an enzyme complex containing four subunits: a flavoprotein (FrdA), an iron-sulfur protein (FrdB), and two hydrophobic anchor proteins (FrdC and FrdD).

The protein resides in the cell inner membrane. In terms of biological role, anchors the catalytic components of the fumarate reductase complex to the cell membrane, binds quinones. In Vibrio parahaemolyticus serotype O3:K6 (strain RIMD 2210633), this protein is Fumarate reductase subunit C.